The following is a 188-amino-acid chain: Probable manganese efflux pump MntP (188 aa).

5 consecutive transmembrane segments (helical) span residues 3-23 (ITAT…ASVG), 66-86 (LEWN…RMII), 106-128 (WLLV…GLAF), 143-163 (ATLI…SIIG), and 168-188 (ILGG…HFHG).

The protein belongs to the MntP (TC 9.B.29) family.

Its subcellular location is the cell inner membrane. In terms of biological role, probably functions as a manganese efflux pump. This Shigella sonnei (strain Ss046) protein is Probable manganese efflux pump MntP.